Here is a 316-residue protein sequence, read N- to C-terminus: Ribosomal RNA small subunit methyltransferase H (316 aa).

S-adenosyl-L-methionine-binding positions include 35–37 (SGH), Asp55, Phe84, Asp105, and Gln112.

It belongs to the methyltransferase superfamily. RsmH family.

The protein resides in the cytoplasm. It carries out the reaction cytidine(1402) in 16S rRNA + S-adenosyl-L-methionine = N(4)-methylcytidine(1402) in 16S rRNA + S-adenosyl-L-homocysteine + H(+). Its function is as follows. Specifically methylates the N4 position of cytidine in position 1402 (C1402) of 16S rRNA. The sequence is that of Ribosomal RNA small subunit methyltransferase H from Streptococcus pyogenes serotype M18 (strain MGAS8232).